Consider the following 890-residue polypeptide: Pentatricopeptide repeat-containing protein At3g57430, chloroplastic (890 aa).

The N-terminal 44 residues, 1–44 (MSCPLAFTFSLPSIFPFPSQLLPFSRHKHPYLLRATPTSATEDV), are a transit peptide targeting the chloroplast. PPR repeat units follow at residues 61-95 (SPEWWIDLLRSKVRSNLLREAVLTYVDMIVLGIKP), 96-130 (DNYAFPALLKAVADLQDMELGKQIHAHVYKFGYGV), 132-162 (SVTVANTLVNLYRKCGDFGAVYKVFDRISER), 163-197 (NQVSWNSLISSLCSFEKWEMALEAFRCMLDENVEP), 198-231 (SSFTLVSVVTACSNLPMPEGLMMGKQVHAYGLRK), 235-265 (NSFIINTLVAMYGKLGKLASSKVLLGSFGGR), 266-300 (DLVTWNTVLSSLCQNEQLLEALEYLREMVLEGVEP), 301-335 (DEFTISSVLPACSHLEMLRTGKELHAYALKNGSLD), 337-371 (NSFVGSALVDMYCNCKQVLSGRRVFDGMFDRKIGL), 372-398 (WNAMIAGYSQNEHDKEALLLFIGMEES), 404-438 (NSTTMAGVVPACVRSGAFSRKEAIHGFVVKRGLDR), 439-473 (DRFVQNTLMDMYSRLGKIDIAMRIFGKMEDRDLVT), 474-504 (WNTMITGYVFSEHHEDALLLLHKMQNLERKV), 516-550 (NSITLMTILPSCAALSALAKGKEIHAYAIKNNLAT), 551-581 (DVAVGSALVDMYAKCGCLQMSRKVFDQIPQK), 582-616 (NVITWNVIIMAYGMHGNGQEAIDLLRMMMVQGVKP), 617-652 (NEVTFISVFAACSHSGMVDEGLRIFYVMKPDYGVEP), and 653-683 (SSDHYACVVDLLGRAGRIKEAYQLMNMMPRD). Residues 689-764 (AWSSLLGASR…EPGCSWIEHG (76 aa)) are type E motif. Residues 765–795 (DEVHKFVAGDSSHPQSEKLSGYLETLWERMR) form a type E(+) motif region. The tract at residues 796–890 (KEGYVPDTSC…NGTCSCGDYW (95 aa)) is type DYW motif.

Belongs to the PPR family. PCMP-H subfamily.

It is found in the plastid. It localises to the chloroplast. Its function is as follows. Involved in RNA editing events in chloroplasts. Required for the editing of a single site in ndhB and ndhF transcripts, which are two plastid-encoded subunits of the chloroplast NAD(P)H dehydrogenase (NDH) complex. Required for the editing of a single site in psbZ. Required for optimal activity of the NDH complex of the photosynthetic electron transport chain. The protein is Pentatricopeptide repeat-containing protein At3g57430, chloroplastic (PCMP-H81) of Arabidopsis thaliana (Mouse-ear cress).